A 553-amino-acid polypeptide reads, in one-letter code: Probable bifunctional riboflavin biosynthesis protein RIBA 2, chloroplastic (553 aa).

The transit peptide at 1–56 (MASISPTSSSVAALRGHPVQFVKGGAVSKEAKGSISFSPVANSNNANVKFTGLRVA) directs the protein to the chloroplast. Residues 62–336 (DGAFPGDGYS…IADLIRYRRK (275 aa)) are DHBP synthase. The interval 70–90 (YSGNDNTVLPKSTSVRGQDYP) is disordered. A compositionally biased stretch (polar residues) spans 72 to 85 (GNDNTVLPKSTSVR). D-ribulose 5-phosphate is bound by residues 160-161 (RE), D165, 275-279 (RAGHT), and E299. E161 is a binding site for Mg(2+). H278 is a Mg(2+) binding site. Residues 337 to 553 (RDRLVERSSV…TGSNGAKGEH (217 aa)) are GTP cyclohydrolase II. Residue 387 to 391 (RVHSE) coordinates GTP. Zn(2+) contacts are provided by C392, C403, and C405. GTP-binding positions include Q408, 431 to 433 (EGR), and T453. The Proton acceptor; for GTP cyclohydrolase activity role is filled by D465. Residue R467 is the Nucleophile; for GTP cyclohydrolase activity of the active site. GTP-binding residues include T488 and K493.

This sequence in the N-terminal section; belongs to the DHBP synthase family. In the C-terminal section; belongs to the GTP cyclohydrolase II family. The cofactor is Mg(2+). Requires Mn(2+) as cofactor. Zn(2+) is required as a cofactor.

It is found in the plastid. Its subcellular location is the chloroplast. The catalysed reaction is D-ribulose 5-phosphate = (2S)-2-hydroxy-3-oxobutyl phosphate + formate + H(+). The enzyme catalyses GTP + 4 H2O = 2,5-diamino-6-hydroxy-4-(5-phosphoribosylamino)-pyrimidine + formate + 2 phosphate + 3 H(+). The protein operates within cofactor biosynthesis; riboflavin biosynthesis; 2-hydroxy-3-oxobutyl phosphate from D-ribulose 5-phosphate: step 1/1. It participates in cofactor biosynthesis; riboflavin biosynthesis; 5-amino-6-(D-ribitylamino)uracil from GTP: step 1/4. Functionally, involved in riboflavin biosynthesis. Catalyzes both the conversion of D-ribulose 5-phosphate to formate and 3,4-dihydroxy-2-butanone 4-phosphate and the conversion of GTP to 2,5-diamino-6-ribosylamino-4(3H)-pyrimidinone 5'-phosphate (DARP), formate and pyrophosphate. This chain is Probable bifunctional riboflavin biosynthesis protein RIBA 2, chloroplastic (RIBA2), found in Oryza sativa subsp. japonica (Rice).